Reading from the N-terminus, the 305-residue chain is Putative lipid kinase SAS0691 (305 aa).

Residues 3–139 enclose the DAGKc domain; that stretch reads NKYTHGVLFY…YDVIKINNQY (137 aa). ATP-binding positions include Ser-44, 74–80, and Thr-101; that span reads GDGTVNE. Positions 220, 223, and 225 each coordinate Mg(2+). Residue Glu-281 is the Proton acceptor of the active site.

The protein belongs to the diacylglycerol/lipid kinase family. It depends on Mg(2+) as a cofactor.

Functionally, may catalyze the ATP-dependent phosphorylation of lipids other than diacylglycerol (DAG). The chain is Putative lipid kinase SAS0691 from Staphylococcus aureus (strain MSSA476).